The following is a 951-amino-acid chain: Valine--tRNA ligase (951 aa).

The 'HIGH' region motif lies at 42–52 (PNVTGSLHMGH). A 'KMSKS' region motif is present at residues 554-558 (KMSKS). An ATP-binding site is contributed by K557. Residues 880–944 (AGLINKEDEL…AEAKAKLIEQ (65 aa)) are a coiled coil.

It belongs to the class-I aminoacyl-tRNA synthetase family. ValS type 1 subfamily. In terms of assembly, monomer.

Its subcellular location is the cytoplasm. It carries out the reaction tRNA(Val) + L-valine + ATP = L-valyl-tRNA(Val) + AMP + diphosphate. Its function is as follows. Catalyzes the attachment of valine to tRNA(Val). As ValRS can inadvertently accommodate and process structurally similar amino acids such as threonine, to avoid such errors, it has a 'posttransfer' editing activity that hydrolyzes mischarged Thr-tRNA(Val) in a tRNA-dependent manner. The protein is Valine--tRNA ligase of Salmonella paratyphi A (strain ATCC 9150 / SARB42).